The chain runs to 425 residues: Serine--tRNA ligase (425 aa).

An L-serine-binding site is contributed by 228–230 (TAE). Residue 259-261 (RSE) participates in ATP binding. An L-serine-binding site is contributed by Glu282. 346-349 (EIAS) contributes to the ATP binding site. L-serine is bound at residue Ser382.

This sequence belongs to the class-II aminoacyl-tRNA synthetase family. Type-1 seryl-tRNA synthetase subfamily. Homodimer. The tRNA molecule binds across the dimer.

The protein resides in the cytoplasm. The enzyme catalyses tRNA(Ser) + L-serine + ATP = L-seryl-tRNA(Ser) + AMP + diphosphate + H(+). It catalyses the reaction tRNA(Sec) + L-serine + ATP = L-seryl-tRNA(Sec) + AMP + diphosphate + H(+). The protein operates within aminoacyl-tRNA biosynthesis; selenocysteinyl-tRNA(Sec) biosynthesis; L-seryl-tRNA(Sec) from L-serine and tRNA(Sec): step 1/1. Its function is as follows. Catalyzes the attachment of serine to tRNA(Ser). Is also able to aminoacylate tRNA(Sec) with serine, to form the misacylated tRNA L-seryl-tRNA(Sec), which will be further converted into selenocysteinyl-tRNA(Sec). This is Serine--tRNA ligase from Rickettsia africae (strain ESF-5).